Reading from the N-terminus, the 914-residue chain is Neutral alpha-glucosidase C (914 aa).

D511 functions as the Nucleophile in the catalytic mechanism. E514 is an active-site residue. The active-site Proton donor is D587.

Belongs to the glycosyl hydrolase 31 family.

It carries out the reaction Hydrolysis of terminal, non-reducing (1-&gt;4)-linked alpha-D-glucose residues with release of alpha-D-glucose.. In terms of biological role, has alpha-glucosidase activity. The polypeptide is Neutral alpha-glucosidase C (GANC) (Homo sapiens (Human)).